A 200-amino-acid chain; its full sequence is MASSGNKNINAKLVLLGDVGAGKSSLVLRFVKDQFVEFQESTIGAAFFSQTLAVNDATVKFEIWDTAGQERYHSLAPMYYRGAAAAIIVFDITNQASFERAKKWVQELQAQGNPNMVMALAGNKADLLDARKVSAEEAEIYAQENSLFFMETSAKTATNVKDIFYEIAKRLPRVQPAENPTGMVLPNGPGATAVSSSCCA.

Residue Gly17–Ser25 coordinates GTP. Positions Gln39–Phe47 match the Effector region motif. Residues Asp65 to Gln69, Asn123 to Asp126, and Ser153 to Ala154 contribute to the GTP site. Residues Cys198 and Cys199 are each lipidated (S-geranylgeranyl cysteine).

Belongs to the small GTPase superfamily. Rab family. As to quaternary structure, interacts with VPS9A. Interacts with EREX (via PX domain). Binds to VPS3. As to expression, high in stem, root, and inflorescence.

Its subcellular location is the endosome membrane. It is found in the prevacuolar compartment membrane. Its function is as follows. Involved in the trafficking of soluble cargo proteins from the prevacuolar compartment to the central vacuole. Involved in vacuolar transport of storage proteins with EREX as effector. Regulates membrane trafficking to protein storage vacuoles (PSVs). This is Ras-related protein RABF2a (RABF2A) from Arabidopsis thaliana (Mouse-ear cress).